A 145-amino-acid polypeptide reads, in one-letter code: Probable disulfide formation protein (145 aa).

A helical membrane pass occupies residues 9–28 (ENLLLLIWVQAFLALAGSLF). An intrachain disulfide couples C38 to C41. 2 helical membrane passes run 43–62 (YQRI…AIKK) and 69–86 (PGLF…YHYL). C100 and C106 are disulfide-bonded. Residues 115–137 (GFISIPFMAGVAFLIIFVLHLLI) form a helical membrane-spanning segment.

The protein belongs to the DsbB family. BdbC subfamily.

It is found in the cell membrane. Required for disulfide bond formation in some proteins. The sequence is that of Probable disulfide formation protein from Oceanobacillus iheyensis (strain DSM 14371 / CIP 107618 / JCM 11309 / KCTC 3954 / HTE831).